The following is a 466-amino-acid chain: Ankyrin repeat and SOCS box protein 18 (466 aa).

ANK repeat units lie at residues 119–148 (ELTTPLCIAAAHGHTACVRHLLGRGADPDA), 151–180 (GGRGALHEACLGGHTACVRLLLQHRADPDL), 184–213 (EGLAPLHLCRTAASLGCAQALLEHGASVQR), 218–247 (GRDTPLHVAAQRGLDEHARLYLGRGAHVDA), 251–288 (RGETALSAACGAARRPDEHGRCLRLCALLLRRGAEADA), and 292–321 (DERSPLHKACGHASHSLARLLLRHGADAGA). Residues 405–463 (QMHKPFYQSLFALALTPRCLQHLCRCALRRLFGKRCFDLIPLLPLPKPLQNYLLLEPQG) enclose the SOCS box domain.

This sequence belongs to the ankyrin SOCS box (ASB) family.

Its pathway is protein modification; protein ubiquitination. Its function is as follows. May be a substrate-recognition component of a SCF-like ECS (Elongin-Cullin-SOCS-box protein) E3 ubiquitin-protein ligase complex which mediates the ubiquitination and subsequent proteasomal degradation of target proteins. The protein is Ankyrin repeat and SOCS box protein 18 (ASB18) of Homo sapiens (Human).